Consider the following 776-residue polypeptide: DNA ligase (776 aa).

NAD(+) contacts are provided by residues 31–35 (DAEYD) and 80–81 (SL). The N6-AMP-lysine intermediate role is filled by Lys114. Positions 135, 172, 288, and 312 each coordinate NAD(+). Cys406, Cys409, Cys436, and Cys442 together coordinate Zn(2+). Positions 693–776 (AEGLPLAGQT…TFLAEQGIVV (84 aa)) constitute a BRCT domain.

This sequence belongs to the NAD-dependent DNA ligase family. LigA subfamily. The cofactor is Mg(2+). Requires Mn(2+) as cofactor.

It catalyses the reaction NAD(+) + (deoxyribonucleotide)n-3'-hydroxyl + 5'-phospho-(deoxyribonucleotide)m = (deoxyribonucleotide)n+m + AMP + beta-nicotinamide D-nucleotide.. Functionally, DNA ligase that catalyzes the formation of phosphodiester linkages between 5'-phosphoryl and 3'-hydroxyl groups in double-stranded DNA using NAD as a coenzyme and as the energy source for the reaction. It is essential for DNA replication and repair of damaged DNA. This chain is DNA ligase, found in Pseudomonas putida (strain GB-1).